We begin with the raw amino-acid sequence, 171 residues long: Protein-export protein SecB (171 aa).

The protein belongs to the SecB family. Homotetramer, a dimer of dimers. One homotetramer interacts with 1 SecA dimer.

The protein resides in the cytoplasm. Functionally, one of the proteins required for the normal export of preproteins out of the cell cytoplasm. It is a molecular chaperone that binds to a subset of precursor proteins, maintaining them in a translocation-competent state. It also specifically binds to its receptor SecA. This Histophilus somni (strain 129Pt) (Haemophilus somnus) protein is Protein-export protein SecB.